Consider the following 489-residue polypeptide: NF-kappa-B inhibitor cactus (489 aa).

A compositionally biased stretch (low complexity) spans 1–26 (MPSPTKAAEAATKATATSDCSCSAAS). 2 disordered regions span residues 1–138 (MPSP…SMRL) and 163–203 (NNLG…APPS). Ser45 bears the Phosphoserine; by PKC mark. Polar residues predominate over residues 69-86 (NETSDSGFISGPQSSQIC). Position 135 is a phosphoserine; by PKC (Ser135). Residues 163-180 (NNLGQSSSTQITGRSKFQ) are compositionally biased toward polar residues. A Phosphothreonine; by PKC modification is found at Thr174. The segment covering 181 to 203 (SSTASTANANPSGXGATSSAPPS) has biased composition (low complexity). ANK repeat units lie at residues 220–252 (DGDT…LLNI), 256–285 (VAQT…EVRD), 287–316 (HGNT…ATEI), 350–379 (DGER…DINA), and 384–413 (SGRT…KLNL). Position 308 is a phosphothreonine; by PKC (Thr308). Ser384 is subject to Phosphoserine; by PKC.

It is found in the cytoplasm. Functionally, involved in the formation of the dorsoventral pattern. It inhibits nuclear translocation of the dorsal morphogen in the dorsal region of the embryo. In Drosophila yakuba (Fruit fly), this protein is NF-kappa-B inhibitor cactus (cact).